Reading from the N-terminus, the 177-residue chain is MSRVAKAPVVIPAGVEVKLNGQVISIKGKNGELTRTVHDAVIVKQEANALNFRPREGFRNAWAQAGTTRALLNAMVVGVTEGFTKKLQLVGVGYRAAVKGNVVNLALGFSHPIEHQLPAGITAECPSQTEIVLKGVDKQVIGQAAADLRAYRRPEPYKGKGVRYADEVVRTKEAKKK.

Belongs to the universal ribosomal protein uL6 family. In terms of assembly, part of the 50S ribosomal subunit.

Functionally, this protein binds to the 23S rRNA, and is important in its secondary structure. It is located near the subunit interface in the base of the L7/L12 stalk, and near the tRNA binding site of the peptidyltransferase center. The chain is Large ribosomal subunit protein uL6 from Buchnera aphidicola subsp. Acyrthosiphon kondoi (Acyrthosiphon kondoi symbiotic bacterium).